The sequence spans 519 residues: Apolipoprotein N-acyltransferase (519 aa).

Helical transmembrane passes span 6–26, 47–67, 83–103, 126–146, 174–194, and 206–226; these read APLG…IWIF, LTAI…ITGV, IAAF…FVWL, LFIL…SHSI, LLSA…IDFL, and WHYF…GWLL. Residues 244–482 enclose the CN hydrolase domain; it reads IQGNIPNQIK…YEIHAAPIYR (239 aa). Residue Glu285 is the Proton acceptor of the active site. Lys343 is an active-site residue. The active-site Nucleophile is the Cys394. The chain crosses the membrane as a helical span at residues 496–516; it reads VVFLLLVVSAIAWLYQIVFPL.

This sequence belongs to the CN hydrolase family. Apolipoprotein N-acyltransferase subfamily.

It localises to the cell inner membrane. It carries out the reaction N-terminal S-1,2-diacyl-sn-glyceryl-L-cysteinyl-[lipoprotein] + a glycerophospholipid = N-acyl-S-1,2-diacyl-sn-glyceryl-L-cysteinyl-[lipoprotein] + a 2-acyl-sn-glycero-3-phospholipid + H(+). Its pathway is protein modification; lipoprotein biosynthesis (N-acyl transfer). Its function is as follows. Catalyzes the phospholipid dependent N-acylation of the N-terminal cysteine of apolipoprotein, the last step in lipoprotein maturation. The polypeptide is Apolipoprotein N-acyltransferase (Synechocystis sp. (strain ATCC 27184 / PCC 6803 / Kazusa)).